The following is a 668-amino-acid chain: E3 ubiquitin-protein ligase RNF139 (668 aa).

Residue Ala2 is modified to N-acetylalanine. 11 consecutive transmembrane segments (helical) span residues 51-71 (IGLQIFLRLLGIVVSSIVLIL), 85-105 (AFLLAATSVLVNYYAALHIDF), 125-145 (SLWMALIVLQLTFGIGYVTLL), 154-174 (LMILNILVPIIGLITELPLHI), 178-198 (VVLMSSLILIFNTVLVLAVKL), 293-313 (GMSAVISSIAHYLGLGILAFI), 323-343 (LGFVAPVLFFILALQTGLSGL), 356-376 (MCLLLTAVLHFIHGMTDPVLM), 390-410 (FPVLFVSACLFILPVLLSYVL), 420-440 (LFAVTAFCVELCLKVIVSLTV), and 470-490 (IIEFIFGVVMFGNGAYTMMFE). An RING-type; atypical zinc finger spans residues 547–586 (CAICYHEFTTSARITPCNHYFHALCLRKWLYIQDTCPMCH). Residues 602–668 (SNNNGFIAPN…AAAEFNDDTD (67 aa)) are disordered. Residues 618-630 (EALREDAAGSDRE) are compositionally biased toward basic and acidic residues. Acidic residues predominate over residues 631-641 (LNEDDSTDCDD). The residue at position 636 (Ser636) is a Phosphoserine. 2 positions are modified to phosphothreonine: Thr637 and Thr667.

Interacts with VHL. Interacts with MHC class I and HM13. Component of SCAP-SREBP complex composed of SREBF2, SCAP and RNF139; the complex hampers the interaction between SCAP and SEC24B, thereby reducing SREBF2 proteolytic processing. Interacts with SREBF2 (via C-terminal domain). Interacts with SCAP; the interaction inhibits the interaction of SCAP with SEC24B and hampering the ER to Golgi transport of the SCAP-SREBP complex. Interacts with SEC24B. Interacts with INSIG1 and INSIG2. Interacts with EIF3F and EIF3H; the interaction leads to protein translation inhibitions in a ubiquitination-dependent manner. Interacts with XBP1 isoform 1; the interaction induces ubiquitination and degradation of XBP1 isoform 1. Interacts with AUP1, AMFR and UBE2G2; interaction with AUP1 facilitates interaction of RNF139 with ubiquitin-conjugating enzyme UBE2G2 and ubiquitin ligase AMFR/gp78, leading to sterol-induced ubiquitination of HMGCR and its subsequent proteasomal degradation. Autoubiquitinated. Ubiquitination is induced by sterol and leads to ist degradation via the ubiquitin-proteasome pathway.

The protein resides in the endoplasmic reticulum membrane. The catalysed reaction is S-ubiquitinyl-[E2 ubiquitin-conjugating enzyme]-L-cysteine + [acceptor protein]-L-lysine = [E2 ubiquitin-conjugating enzyme]-L-cysteine + N(6)-ubiquitinyl-[acceptor protein]-L-lysine.. The protein operates within protein modification; protein ubiquitination. Functionally, E3-ubiquitin ligase; acts as a negative regulator of cell proliferation through mechanisms involving G2/M arrest and cell death. Required for MHC class I ubiquitination in cells expressing the cytomegalovirus protein US2 before dislocation from the endoplasmic reticulum (ER). Affects SREBP processing by hindering the SREBP-SCAP complex translocation from the ER to the Golgi, thereby reducing SREBF2 target gene expression. Involved in the sterol-accelerated degradation of HMGCR. This is achieved through binding to INSIG1 and/or INSIG2 at the ER membrane. In addition, interaction of RNF139 with AUP1 facilitates interaction of RNF139 with ubiquitin-conjugating enzyme UBE2G2 and ubiquitin ligase AMFR, leading to ubiquitination of HMGCR. The ubiquitinated HMGCR is then released from the ER by the complex into the cytosol for subsequent destruction. Required for INSIG1 ubiquitination. May be required for EIF3 complex ubiquitination. This Mus musculus (Mouse) protein is E3 ubiquitin-protein ligase RNF139.